We begin with the raw amino-acid sequence, 224 residues long: MNHLDRLQRQISYEFKDITLLKQALTHRSAATKHNERLEFLGDAILNYTIADALYHQFPKCNEGELSRMRATLVREPTLAILARQFKLGEYMALGHGELKSGGFRRESILADCVEAIIGAISLDSSLVSATQITLHWYEKLLREIKPGENQKDPKTRLQEYLQGHRLALPTYDVKDIKGEAHCQTFTIECHVPNLDRTFIGVGSSRRKAEQAAAEQILTALEIK.

The RNase III domain occupies L4–S126. Residue E39 participates in Mg(2+) binding. D43 is a catalytic residue. Mg(2+)-binding residues include D112 and E115. E115 is an active-site residue. Positions D153–I223 constitute a DRBM domain.

This sequence belongs to the ribonuclease III family. In terms of assembly, homodimer. Requires Mg(2+) as cofactor.

Its subcellular location is the cytoplasm. It carries out the reaction Endonucleolytic cleavage to 5'-phosphomonoester.. In terms of biological role, digests double-stranded RNA. Involved in the processing of primary rRNA transcript to yield the immediate precursors to the large and small rRNAs (23S and 16S). Processes some mRNAs, and tRNAs when they are encoded in the rRNA operon. Processes pre-crRNA and tracrRNA of type II CRISPR loci if present in the organism. In Mannheimia succiniciproducens (strain KCTC 0769BP / MBEL55E), this protein is Ribonuclease 3.